Reading from the N-terminus, the 378-residue chain is UDP-N-acetylenolpyruvoylglucosamine reductase (378 aa).

An FAD-binding PCMH-type domain is found at 15–185; that stretch reads VGGTPERLLE…LSVDLELADH (171 aa). R163 is an active-site residue. S248 functions as the Proton donor in the catalytic mechanism. E370 is an active-site residue.

Belongs to the MurB family. The cofactor is FAD.

Its subcellular location is the cytoplasm. It carries out the reaction UDP-N-acetyl-alpha-D-muramate + NADP(+) = UDP-N-acetyl-3-O-(1-carboxyvinyl)-alpha-D-glucosamine + NADPH + H(+). The protein operates within cell wall biogenesis; peptidoglycan biosynthesis. Functionally, cell wall formation. In Leifsonia xyli subsp. xyli (strain CTCB07), this protein is UDP-N-acetylenolpyruvoylglucosamine reductase.